The sequence spans 124 residues: Ribonuclease pancreatic (124 aa).

Substrate is bound by residues K7 and R10. H12 acts as the Proton acceptor in catalysis. Disulfide bonds link C26/C84, C40/C95, C58/C110, and C65/C72. The N-linked (GlcNAc...) asparagine glycan is linked to N34. Substrate is bound by residues 41–45, K66, and R85; that span reads KPVNT. The Proton donor role is filled by H119.

The protein belongs to the pancreatic ribonuclease family. As to quaternary structure, monomer. Interacts with and forms tight 1:1 complexes with RNH1. Dimerization of two such complexes may occur. Interaction with RNH1 inhibits this protein. Pancreas.

It localises to the secreted. It carries out the reaction an [RNA] containing cytidine + H2O = an [RNA]-3'-cytidine-3'-phosphate + a 5'-hydroxy-ribonucleotide-3'-[RNA].. The enzyme catalyses an [RNA] containing uridine + H2O = an [RNA]-3'-uridine-3'-phosphate + a 5'-hydroxy-ribonucleotide-3'-[RNA].. Endonuclease that catalyzes the cleavage of RNA on the 3' side of pyrimidine nucleotides. Acts on single-stranded and double-stranded RNA. This Mesocricetus auratus (Golden hamster) protein is Ribonuclease pancreatic (RNASE1).